A 120-amino-acid polypeptide reads, in one-letter code: Histone H3-like centromeric protein cnp1 (120 aa).

The interval 1–26 (MAKKSLMAEPGDPIPRPRKKRYRPGT) is disordered. Residues 14-120 (IPRPRKKRYR…MQLARRIRGA (107 aa)) are H3-like.

It belongs to the histone H3 family. Component of centromeric nucleosomes, where DNA is wrapped around a histone octamer core. The octamer contains two molecules each of H2A, H2B, cnp1/CENPA and H4 assembled in one cnp1-H4 heterotetramer and two H2A-H2B heterodimers. Interacts with the inner kinetochore. Component of centromeric nucleosomes. Interacts with mis6. Interacts with sim4. Post-translationally, ubiquitinated. Is degraded through ubiquitin-mediated proteolysis when not protected by its association to the kinetochore.

Its subcellular location is the nucleus. It is found in the chromosome. It localises to the centromere. Histone H3-like nucleosomal protein that is specifically found in centromeric nucleosomes. Replaces conventional H3 in the nucleosome core of centromeric chromatin that serves as an assembly site for the inner kinetochore. Required for recruitment and assembly of kinetochore proteins, mitotic progression and chromosome segregation. May serve as an epigenetic mark that propagates centromere identity through replication and cell division. The polypeptide is Histone H3-like centromeric protein cnp1 (cnp1) (Schizosaccharomyces pombe (strain 972 / ATCC 24843) (Fission yeast)).